The primary structure comprises 909 residues: MVAAPLLRAHQAARLQSVSTSRLGLNPHVIKSAGRLQLLRGSSFSTATSKWQAGVLDRTRNIGIIAHIDAGKTTTTERMLYYSGFTRRIGDVDEGSTVTDFLPAERARGITIQSAAITFHWPPQTAGDGNTTPQEPQTPRSASSHTVNLIDTPGHADFTFEVMRSLRILDGAVCILDGVAGVEAQTEQVWHQASTYRIPRIVYVNKLDRDGAAFGRTVREVASRLGGWPAVCQIPWFEGGNGRFTGIADAINLQGLRWEEGDGKSVKMFNLEQLASEEPQLAQELKRARVALVELLSEHDEAMVEKFFDCEEDHLAVPPNDILESLRRCLLEEQGRKIIPIFAGASFRNIGVQPLLDAVTNLLPSPPETPEPEVSIGGVKGGLRRLLSGDLLVEQGEKAASAKGKHKKKSAIQAESRNAIEKLQGCALAFKVVNDPKRGVLVYVRVYSGSLDRNSILYNTNLNVSERAPRLLKMYANDAVEVDSIPEGHIGVVAGLKHTRTGDTLVTYSGNKATPPEPLNTLQLRPITVPPPVFFASVEPHSLSEEKRLQESLAMLLREDPSLHVTVDEDSGQTLLSGMGELHLEIARDRLLNDLKAKASMGRIEIGYRECPLGASGPITKIFDKEIAGRKGKAGCTATVEPFDPEETTTEPDPSTLSIQTTDGNQIIIQAPGLEVEVNKKGIEESPLLPPGLDVHALRTALQNGCLAALARGPQFTFPMHGTRVTLTFNPAEHLFGNESTPSALSAAARLATSSALRDLPSGAGTSLMEPVMNVIISVDEASLGAVVHDISSSRGGHIISLDEETPLQTTGITSNPTDDLLPPIDPNKVYAPPDPFQSSTVGIDLPSSANRPRTITAKVPLKEMVGYLKHLRSLSAGRGTFVMSVDRFEKMSAPRQKAVLAELRGDFF.

Residues 1-15 (MVAAPLLRAHQAARL) constitute a mitochondrion transit peptide. A tr-type G domain is found at 57–367 (DRTRNIGIIA…AVTNLLPSPP (311 aa)). 66–73 (AHIDAGKT) provides a ligand contact to GTP. Residues 121–148 (WPPQTAGDGNTTPQEPQTPRSASSHTVN) form a disordered region. A compositionally biased stretch (polar residues) spans 127-148 (GDGNTTPQEPQTPRSASSHTVN). Residues 151–155 (DTPGH) and 205–208 (NKLD) each bind GTP.

The protein belongs to the TRAFAC class translation factor GTPase superfamily. Classic translation factor GTPase family. EF-G/EF-2 subfamily.

Its subcellular location is the mitochondrion. Mitochondrial GTPase that mediates the disassembly of ribosomes from messenger RNA at the termination of mitochondrial protein biosynthesis. Not involved in the GTP-dependent ribosomal translocation step during translation elongation. The polypeptide is Ribosome-releasing factor 2, mitochondrial (mef2) (Aspergillus flavus (strain ATCC 200026 / FGSC A1120 / IAM 13836 / NRRL 3357 / JCM 12722 / SRRC 167)).